The chain runs to 337 residues: Fructose-1,6-bisphosphatase class 1 (337 aa).

Mg(2+) contacts are provided by Glu89, Asp112, Leu114, and Asp115. Residues 115–118, Asn208, Tyr241, and Lys271 each bind substrate; that span reads DGSS. Mg(2+) is bound at residue Glu277.

The protein belongs to the FBPase class 1 family. As to quaternary structure, homotetramer. Requires Mg(2+) as cofactor.

Its subcellular location is the cytoplasm. It carries out the reaction beta-D-fructose 1,6-bisphosphate + H2O = beta-D-fructose 6-phosphate + phosphate. It functions in the pathway carbohydrate biosynthesis; gluconeogenesis. The sequence is that of Fructose-1,6-bisphosphatase class 1 from Yersinia pseudotuberculosis serotype O:1b (strain IP 31758).